We begin with the raw amino-acid sequence, 230 residues long: Large ribosomal subunit protein uL1 (230 aa).

Belongs to the universal ribosomal protein uL1 family. As to quaternary structure, part of the 50S ribosomal subunit.

Functionally, binds directly to 23S rRNA. The L1 stalk is quite mobile in the ribosome, and is involved in E site tRNA release. In terms of biological role, protein L1 is also a translational repressor protein, it controls the translation of the L11 operon by binding to its mRNA. The chain is Large ribosomal subunit protein uL1 from Nitrosomonas europaea (strain ATCC 19718 / CIP 103999 / KCTC 2705 / NBRC 14298).